A 409-amino-acid chain; its full sequence is Nucleoprotein (409 aa).

Disordered regions lie at residues 1–32 (MASG…SSGN), 45–69 (NSHP…QQHG), 122–145 (DVKS…LRFS), 164–194 (RSGR…GSED), and 238–259 (VDQV…DKMN). The span at 15–31 (PVIKLGGPKPPKVGSSG) shows a compositional bias: low complexity. The tract at residues 29-160 (SSGNASWFQA…GNFRWDFIPL (132 aa)) is RNA-binding. One can recognise a CoV N NTD domain in the interval 31-156 (GNASWFQAIK…GGPDGNFRWD (126 aa)). The span at 122-138 (DVKSRSHQGTRDPDKFD) shows a compositional bias: basic and acidic residues. Residues 164–179 (RSGRSTAASSAASSRA) are compositionally biased toward low complexity. Basic and acidic residues-rich tracts occupy residues 180–192 (PSRD…RSGS) and 247–259 (KGKE…DKMN). 2 positions are modified to phosphoserine; by host: Ser190 and Ser192. The 113-residue stretch at 219–331 (ADEMAHRRYC…QCVDGVGTRP (113 aa)) folds into the CoV N CTD domain. Residues 226–333 (RYCKRTIPPG…VDGVGTRPKD (108 aa)) are dimerization. Residues Cys320 and Cys323 are joined by a disulfide bond. A disordered region spans residues 326–409 (GVGTRPKDDE…GDSALGENEL (84 aa)). Over residues 341-357 (RSSSRPATRTSSPAPRQ) the composition is skewed to low complexity. Residues 358–367 (QRPKKEKKPK) are compositionally biased toward basic residues. Position 378 is a phosphothreonine; by host (Thr378). At Ser379 the chain carries Phosphoserine; by host.

This sequence belongs to the gammacoronavirus nucleocapsid protein family. In terms of assembly, homooligomer. Both monomeric and oligomeric forms interact with RNA. Interacts with protein M. Interacts with NSP3; this interaction serves to tether the genome to the newly translated replicase-transcriptase complex at a very early stage of infection. Post-translationally, ADP-ribosylated. The ADP-ribosylation is retained in the virion during infection. Phosphorylated on serine and threonine residues.

It is found in the virion. The protein localises to the host endoplasmic reticulum-Golgi intermediate compartment. The protein resides in the host Golgi apparatus. In terms of biological role, packages the positive strand viral genome RNA into a helical ribonucleocapsid (RNP) and plays a fundamental role during virion assembly through its interactions with the viral genome and membrane protein M. Plays an important role in enhancing the efficiency of subgenomic viral RNA transcription as well as viral replication. The protein is Nucleoprotein of Avian infectious bronchitis virus (strain Arkansas 99) (IBV).